Consider the following 88-residue polypeptide: Small ribosomal subunit protein bS20 (88 aa).

Positions 1-11 (MANIKSSEKDI) are enriched in basic and acidic residues. 2 disordered regions span residues 1 to 31 (MANIKSSEKDIRRTKRRNAANSQNRSRLRTQ) and 69 to 88 (SKNADRKKSRMAKRLNSSAA).

Belongs to the bacterial ribosomal protein bS20 family.

Its function is as follows. Binds directly to 16S ribosomal RNA. This chain is Small ribosomal subunit protein bS20, found in Leptospira interrogans serogroup Icterohaemorrhagiae serovar copenhageni (strain Fiocruz L1-130).